The primary structure comprises 381 residues: Pyrimidine monooxygenase RutA (381 aa).

Residues 66 to 67 (IK), Asn-132, Glu-141, 157 to 158 (RY), and Ser-207 contribute to the FMN site.

The protein belongs to the NtaA/SnaA/DszA monooxygenase family. RutA subfamily.

It carries out the reaction uracil + FMNH2 + NADH + O2 = (Z)-3-ureidoacrylate + FMN + NAD(+) + H2O + H(+). The enzyme catalyses thymine + FMNH2 + NADH + O2 = (Z)-2-methylureidoacrylate + FMN + NAD(+) + H2O + H(+). Its function is as follows. Catalyzes the pyrimidine ring opening between N-3 and C-4 by an unusual flavin hydroperoxide-catalyzed mechanism, adding oxygen atoms in the process to yield ureidoacrylate peracid, that immediately reacts with FMN forming ureidoacrylate and FMN-N(5)-oxide. The FMN-N(5)-oxide reacts spontaneously with NADH to produce FMN. Requires the flavin reductase RutF to regenerate FMN in vivo. The chain is Pyrimidine monooxygenase RutA from Methylobacterium radiotolerans (strain ATCC 27329 / DSM 1819 / JCM 2831 / NBRC 15690 / NCIMB 10815 / 0-1).